A 24-amino-acid polypeptide reads, in one-letter code: Brevinin-1 (24 aa).

Cysteine 18 and cysteine 24 are joined by a disulfide.

Belongs to the frog skin active peptide (FSAP) family. Brevinin subfamily. Expressed by the skin glands.

Its subcellular location is the secreted. Shows antibacterial activity against representative Gram-negative and Gram-positive bacterial species, and a very high hemolytic activity. The sequence is that of Brevinin-1 from Pelophylax porosus brevipodus (Nagoya Daruma pond frog).